Reading from the N-terminus, the 32-residue chain is ATP synthase 28 kDa subunit, mitochondrial (32 aa).

The protein resides in the mitochondrion. It localises to the mitochondrion inner membrane. Mitochondrial membrane ATP synthase (F(1)F(0) ATP synthase or Complex V) produces ATP from ADP in the presence of a proton gradient across the membrane which is generated by electron transport complexes of the respiratory chain. F-type ATPases consist of two structural domains, F(1) - containing the extramembraneous catalytic core and F(0) - containing the membrane proton channel, linked together by a central stalk and a peripheral stalk. During catalysis, ATP synthesis in the catalytic domain of F(1) is coupled via a rotary mechanism of the central stalk subunits to proton translocation. Part of the complex F(0) domain. This Spinacia oleracea (Spinach) protein is ATP synthase 28 kDa subunit, mitochondrial.